Here is a 428-residue protein sequence, read N- to C-terminus: MQKLVKTWLKRSKRIRGVLLQFSKELFFEFNERGCQRSAAALTYMTLFALVPLMTVTYTMFSAIPAFDGVGDQLNGLIFHHFLPETGEEVSQYLSDFSSQARRLSGVGVVMLLVTAYLMLRNIETTFNSIWGVKQARSGLSGYLLYWAILSVGPILVAAAFLLSTYLLSVQIMLEDLDGLGVMQLVYRVVPWALTSAAFTLLFVAVPNCRVPFKFGAIGGVITAFAFEVVKAVFGYIVANSSFKLIYGAFAVVPLFLLWVNLLWTIILGGAVFVRTLAEHSYASRISRLSDMIVVLICLALFREKAALGESVSDRDCVRLGIGLVHWQRMRSLMVEHRWIAVTESGDYVLSRDLRRANIWEVASMVRMPVSEELSSLRENIAGRAPWFADFLERQSELRSHAESAFSVSLESLFAAEHEEEKPLTDQT.

The next 7 membrane-spanning stretches (helical) occupy residues 47–67 (LFAL…IPAF), 104–124 (LSGV…RNIE), 143–163 (YLLY…AFLL), 189–209 (VVPW…VPNC), 218–238 (IGGV…GYIV), 248–268 (GAFA…TIIL), and 292–312 (MIVV…GESV).

Belongs to the UPF0761 family.

It is found in the cell inner membrane. The polypeptide is UPF0761 membrane protein TERTU_3006 (Teredinibacter turnerae (strain ATCC 39867 / T7901)).